Consider the following 406-residue polypeptide: Phosphopentomutase (406 aa).

6 residues coordinate Mn(2+): D10, D305, H310, D346, H347, and H358.

This sequence belongs to the phosphopentomutase family. Mn(2+) is required as a cofactor.

The protein resides in the cytoplasm. It catalyses the reaction 2-deoxy-alpha-D-ribose 1-phosphate = 2-deoxy-D-ribose 5-phosphate. The enzyme catalyses alpha-D-ribose 1-phosphate = D-ribose 5-phosphate. Its pathway is carbohydrate degradation; 2-deoxy-D-ribose 1-phosphate degradation; D-glyceraldehyde 3-phosphate and acetaldehyde from 2-deoxy-alpha-D-ribose 1-phosphate: step 1/2. Its function is as follows. Isomerase that catalyzes the conversion of deoxy-ribose 1-phosphate (dRib-1-P) and ribose 1-phosphate (Rib-1-P) to deoxy-ribose 5-phosphate (dRib-5-P) and ribose 5-phosphate (Rib-5-P), respectively. This is Phosphopentomutase from Photobacterium profundum (strain SS9).